A 284-amino-acid chain; its full sequence is Pantothenate synthetase (284 aa).

30–37 (MGALHEGH) is an ATP binding site. Histidine 37 functions as the Proton donor in the catalytic mechanism. Glutamine 61 is a (R)-pantoate binding site. Glutamine 61 contributes to the beta-alanine binding site. 147–150 (GEKD) is an ATP binding site. Glutamine 153 lines the (R)-pantoate pocket. Residues valine 176 and 184–187 (TSSR) contribute to the ATP site.

This sequence belongs to the pantothenate synthetase family. In terms of assembly, homodimer.

It is found in the cytoplasm. It carries out the reaction (R)-pantoate + beta-alanine + ATP = (R)-pantothenate + AMP + diphosphate + H(+). It participates in cofactor biosynthesis; (R)-pantothenate biosynthesis; (R)-pantothenate from (R)-pantoate and beta-alanine: step 1/1. Catalyzes the condensation of pantoate with beta-alanine in an ATP-dependent reaction via a pantoyl-adenylate intermediate. This Chlorobaculum tepidum (strain ATCC 49652 / DSM 12025 / NBRC 103806 / TLS) (Chlorobium tepidum) protein is Pantothenate synthetase.